The following is a 307-amino-acid chain: Dihydroorotate dehydrogenase B (NAD(+)), catalytic subunit (307 aa).

FMN contacts are provided by residues Ser22 and 46-47; that span reads KG. Residues Lys46 and 70–74 each bind substrate; that span reads NAVGL. The FMN site is built by Asn100 and Asn128. Position 128 (Asn128) interacts with substrate. The active-site Nucleophile is the Cys131. The FMN site is built by Lys166 and Val192. A substrate-binding site is contributed by 193 to 194; it reads NT. FMN contacts are provided by residues Gly218 and 244–245; that span reads GG.

Belongs to the dihydroorotate dehydrogenase family. Type 1 subfamily. As to quaternary structure, heterotetramer of 2 PyrK and 2 PyrD type B subunits. Requires FMN as cofactor.

The protein resides in the cytoplasm. The catalysed reaction is (S)-dihydroorotate + NAD(+) = orotate + NADH + H(+). The protein operates within pyrimidine metabolism; UMP biosynthesis via de novo pathway; orotate from (S)-dihydroorotate (NAD(+) route): step 1/1. Its function is as follows. Catalyzes the conversion of dihydroorotate to orotate with NAD(+) as electron acceptor. This is Dihydroorotate dehydrogenase B (NAD(+)), catalytic subunit (pyrD) from Porphyromonas gingivalis (strain ATCC BAA-308 / W83).